A 67-amino-acid chain; its full sequence is Conotoxin LiC33 (67 aa).

An N-terminal signal peptide occupies residues 1–22; the sequence is MRCVPVFIILLLLSPSAPSVDA. Positions 23–48 are excised as a propeptide; that stretch reads HPKTKDDVPLASFHDDAKRTLQRLWI. Phenylalanine amide is present on phenylalanine 63. Positions 65 to 67 are excised as a propeptide; it reads KGK.

It belongs to the conotoxin T superfamily. Contains 2 disulfide bonds that can be either 'C1-C3, C2-C4' or 'C1-C4, C2-C3', since these disulfide connectivities have been observed for conotoxins with cysteine framework V (for examples, see AC P0DQQ7 and AC P81755). In terms of tissue distribution, expressed by the venom duct.

The protein resides in the secreted. This is Conotoxin LiC33 from Conus lividus (Livid cone).